The primary structure comprises 207 residues: LexA repressor (207 aa).

Positions 28–48 (RAEIARELGFRSANAAEEHLK) form a DNA-binding region, H-T-H motif. Catalysis depends on for autocatalytic cleavage activity residues Ser124 and Lys161.

Belongs to the peptidase S24 family. In terms of assembly, homodimer.

The catalysed reaction is Hydrolysis of Ala-|-Gly bond in repressor LexA.. Its function is as follows. Represses a number of genes involved in the response to DNA damage (SOS response), including recA and lexA. In the presence of single-stranded DNA, RecA interacts with LexA causing an autocatalytic cleavage which disrupts the DNA-binding part of LexA, leading to derepression of the SOS regulon and eventually DNA repair. The protein is LexA repressor of Vibrio vulnificus (strain CMCP6).